Here is an 898-residue protein sequence, read N- to C-terminus: MSLQKLENSSNKSVVQEEVLILTELLEDITKNMLAPETFEKIIQLKELSTQEDYQGLNRLVTSLSNDEMVYISRYFSILPLLINISEDVDLAYEINHQNNIDQDYLGKLSTTIKLVAEKENAVEILEHLNVVPVLTAHPTQVQRKSMLDLTNHIHSLLRKYRDVKLGLINKDKWYNDLRRYIEIIMQTDMIREKKLKVTNEITNAMEYYNSSFLKAVPHLTTEYKRLAQAHGLNLKQAKPITMGMWIGGDRDGNPFVTAKTLKQSALTQCEVIMNYYDKKIYQLYREFSLSTSIVNVSKQVREMARQSKDNSIYREKELYRRALFDIQSKIQATKTYLIEDEEVGTRYETANDFYKDLIAIRDSLLENKGESLISGDFVELLQAVEIFGFYLASIDMRQDSSVYEACVAELLKSAGIHSRYSELSEEEKCDLLLKELEEDPRILSATHAEKSELLAKELAIFKTARVLKDKLGDDVIRQTIISHATSLSDMLELAILLKEVGLVDTERARVQIVPLFETIEDLDHSEETMRKYLSLSLAKKWIDSRNNYQEIMLGYSDSNKDGGYLSSCWTLYKAQQQLTAIGDEFGVKVTFFHGRGGTVGRGGGPTYEAITSQPLKSIKDRIRLTEQGEVIGNKYGNKDAAYYNLEMLVSAAINRMITQKKSDTNTPNRYEAIMDQVVDRSYDIYRDLVFGNEHFYDYFFESSPIKAISSFNIGSRPAARKTITEIGGLRAIPWVFSWSQSRVMFPGWYGVGSSFKEFINKNPENIAILRDMYQNWPFFQSLLSNVDMVLSKSNMNIAFEYAKLCEDEQVKAIYETILNEWQVTKNVILAIEGHDELLADNPYLKASLDYRMPYFNILNYIQLELIKRQRRGELSSDQERLIHITINGIATGLRNSG.

Catalysis depends on residues His-138 and Lys-561.

It belongs to the PEPCase type 1 family. It depends on Mg(2+) as a cofactor.

It catalyses the reaction oxaloacetate + phosphate = phosphoenolpyruvate + hydrogencarbonate. In terms of biological role, forms oxaloacetate, a four-carbon dicarboxylic acid source for the tricarboxylic acid cycle. In Streptococcus pneumoniae serotype 2 (strain D39 / NCTC 7466), this protein is Phosphoenolpyruvate carboxylase.